A 97-amino-acid polypeptide reads, in one-letter code: Small ribosomal subunit protein bS20 (97 aa).

The protein belongs to the bacterial ribosomal protein bS20 family.

Functionally, binds directly to 16S ribosomal RNA. The polypeptide is Small ribosomal subunit protein bS20 (Synechocystis sp. (strain ATCC 27184 / PCC 6803 / Kazusa)).